Consider the following 596-residue polypeptide: Delta(24(24(1)))-sterol reductase (596 aa).

The disordered stretch occupies residues 1–122 (MSSRYSLRQT…GHATNGHATS (122 aa)). A compositionally biased stretch (gly residues) spans 98 to 112 (NGNGNGYTNGHGNGN). Helical transmembrane passes span 168–188 (FGTA…WIGA), 225–245 (VWAW…LLPG), 269–289 (WSLY…IWPL), 296–316 (FGPL…VAYF), 353–373 (MFFE…GTAA), 381–401 (YVSG…NACA), 419–439 (GFML…HCTI), and 454–474 (GILA…DSCN). Residues lysine 477, arginine 481, leucine 516, and 528-529 (HY) each bind NADP(+). A helical transmembrane segment spans residues 535-557 (FAVSWGLITGFESPFPWFYPVFF). Residues aspartate 568, 572-576 (CRRKY), and tyrosine 583 contribute to the NADP(+) site.

This sequence belongs to the ERG4/ERG24 family.

It localises to the endoplasmic reticulum membrane. The catalysed reaction is ergosterol + NADP(+) = ergosta-5,7,22,24(28)-tetraen-3beta-ol + NADPH + H(+). Its pathway is steroid metabolism; ergosterol biosynthesis. Delta(24(24(1)))-sterol reductase; part of the third module of ergosterol biosynthesis pathway that includes the late steps of the pathway. ERG4 catalyzes the last step of ergosterol biosynthesis by converting ergosta-5,7,22,24(28)-tetraen-3beta-ol into ergosterol. The third module or late pathway involves the ergosterol synthesis itself through consecutive reactions that mainly occur in the endoplasmic reticulum (ER) membrane. Firstly, the squalene synthase ERG9 catalyzes the condensation of 2 farnesyl pyrophosphate moieties to form squalene, which is the precursor of all steroids. Squalene synthase is crucial for balancing the incorporation of farnesyl diphosphate (FPP) into sterol and nonsterol isoprene synthesis. Secondly, squalene is converted into lanosterol by the consecutive action of the squalene epoxidase ERG1 and the lanosterol synthase ERG7. Then, the delta(24)-sterol C-methyltransferase ERG6 methylates lanosterol at C-24 to produce eburicol. Eburicol is the substrate of the sterol 14-alpha demethylase encoded by CYP51A, CYP51B and CYP51C, to yield 4,4,24-trimethyl ergosta-8,14,24(28)-trienol. CYP51B encodes the enzyme primarily responsible for sterol 14-alpha-demethylation, and plays an essential role in ascospore formation. CYP51A encodes an additional sterol 14-alpha-demethylase, induced on ergosterol depletion and responsible for the intrinsic variation in azole sensitivity. The third CYP51 isoform, CYP51C, does not encode a sterol 14-alpha-demethylase, but is required for full virulence on host wheat ears. The C-14 reductase ERG24 then reduces the C14=C15 double bond which leads to 4,4-dimethylfecosterol. A sequence of further demethylations at C-4, involving the C-4 demethylation complex containing the C-4 methylsterol oxidases ERG25, the sterol-4-alpha-carboxylate 3-dehydrogenase ERG26 and the 3-keto-steroid reductase ERG27, leads to the production of fecosterol via 4-methylfecosterol. ERG28 has a role as a scaffold to help anchor ERG25, ERG26 and ERG27 to the endoplasmic reticulum. The C-8 sterol isomerase ERG2 then catalyzes the reaction which results in unsaturation at C-7 in the B ring of sterols and thus converts fecosterol to episterol. The sterol-C5-desaturases ERG3A and ERG3BB then catalyze the introduction of a C-5 double bond in the B ring to produce 5-dehydroepisterol. The C-22 sterol desaturases ERG5A and ERG5B further convert 5-dehydroepisterol into ergosta-5,7,22,24(28)-tetraen-3beta-ol by forming the C-22(23) double bond in the sterol side chain. Finally, ergosta-5,7,22,24(28)-tetraen-3beta-ol is substrate of the C-24(28) sterol reductase ERG4 to produce ergosterol. In Gibberella zeae (strain ATCC MYA-4620 / CBS 123657 / FGSC 9075 / NRRL 31084 / PH-1) (Wheat head blight fungus), this protein is Delta(24(24(1)))-sterol reductase.